The chain runs to 98 residues: Acylphosphatase (98 aa).

Residues 12–98 enclose the Acylphosphatase-like domain; sequence TYYVRVRGVV…DKRFERFQQH (87 aa). Catalysis depends on residues R27 and N45.

This sequence belongs to the acylphosphatase family.

The enzyme catalyses an acyl phosphate + H2O = a carboxylate + phosphate + H(+). This is Acylphosphatase (acyP) from Burkholderia mallei (strain NCTC 10247).